Consider the following 146-residue polypeptide: Ribosomal RNA large subunit methyltransferase H (146 aa).

Residues Leu-60, Gly-93, and 112 to 117 (MGKMTL) contribute to the S-adenosyl-L-methionine site.

It belongs to the RNA methyltransferase RlmH family. As to quaternary structure, homodimer.

Its subcellular location is the cytoplasm. The catalysed reaction is pseudouridine(1915) in 23S rRNA + S-adenosyl-L-methionine = N(3)-methylpseudouridine(1915) in 23S rRNA + S-adenosyl-L-homocysteine + H(+). Its function is as follows. Specifically methylates the pseudouridine at position 1915 (m3Psi1915) in 23S rRNA. The chain is Ribosomal RNA large subunit methyltransferase H from Koribacter versatilis (strain Ellin345).